We begin with the raw amino-acid sequence, 137 residues long: Ribonuclease VapC3 (137 aa).

The PINc domain occupies 12–129; it reads VVVDASAMVD…LTTDERLARA (118 aa). Residues Asp-15 and Asp-105 each coordinate Mg(2+).

Belongs to the PINc/VapC protein family. The cofactor is Mg(2+).

In terms of biological role, toxic component of a type II toxin-antitoxin (TA) system. An RNase. Its toxic effect is neutralized by coexpression with cognate antitoxin VapB3. This Mycobacterium tuberculosis (strain CDC 1551 / Oshkosh) protein is Ribonuclease VapC3.